A 482-amino-acid polypeptide reads, in one-letter code: BTB/POZ domain and ankyrin repeat-containing protein NOOT1 (482 aa).

The BTB domain maps to 25 to 107; that stretch reads SDVVFSVEGR…LYSGQVSIVP (83 aa). The C2HC NPR-type zinc-finger motif lies at 113–127; it reads RPNCGDRGCWHTHCT. Positions 116, 121, 123, and 126 each coordinate Zn(2+). ANK repeat units lie at residues 249-278, 279-308, 313-342, and 346-380; these read QKIR…LNLD, EALA…DVNF, TGKT…DPNV, and DGVT…KLRL. The disordered stretch occupies residues 395–434; the sequence is EEGNNNNSNNNNNATASSATNMYPHHNMNEDHHHSHNNNN. A compositionally biased stretch (low complexity) spans 398–415; that stretch reads NNNNSNNNNNATASSATN.

This sequence belongs to the plant 'ANKYRIN-BTB/POZ' family. 'NOOT-BOP-COCH-like' (NBCL) subfamily. In terms of assembly, homodimer. Expressed in the shoot apical meristem (SAM) at the base of the developing leaf where stipules are formed. Associated with functional and vestigial abscission zones (AZs), including pulvini.

It localises to the nucleus. The protein resides in the cytoplasm. It is found in the cell membrane. It functions in the pathway protein modification; protein ubiquitination. Its function is as follows. May act as a substrate-specific adapter of an E3 ubiquitin-protein ligase complex (CUL3-RBX1-BTB) which mediates the ubiquitination and subsequent proteasomal degradation of target proteins. Transcriptional co-regulator involved in the promotion of leaf and floral meristem fate and determinacy. Promotes normal stipule growth and development. Required for the abscission of senescent organs, probably by regulating the cell wall disorganization in abscission zones (AZs, e.g. pulvini at the base of leaves). Involved in the coordination of the symbiotic nodule developmental program. Promotes the formation of root nodules by interacting directly with APP1 to modulate the expression of the nuclear transcription factor Y subunit (NF-YA1), a key nodulin. Necessary for the robust maintenance of nodule identity throughout the nodule developmental program. Involved in the regulation of indeterminate nodule identity in association with NOOT2. The protein is BTB/POZ domain and ankyrin repeat-containing protein NOOT1 of Medicago truncatula (Barrel medic).